We begin with the raw amino-acid sequence, 342 residues long: Phosphoribosylformylglycinamidine cyclo-ligase (342 aa).

The protein belongs to the AIR synthase family.

It is found in the cytoplasm. It carries out the reaction 2-formamido-N(1)-(5-O-phospho-beta-D-ribosyl)acetamidine + ATP = 5-amino-1-(5-phospho-beta-D-ribosyl)imidazole + ADP + phosphate + H(+). The protein operates within purine metabolism; IMP biosynthesis via de novo pathway; 5-amino-1-(5-phospho-D-ribosyl)imidazole from N(2)-formyl-N(1)-(5-phospho-D-ribosyl)glycinamide: step 2/2. This Staphylococcus aureus (strain bovine RF122 / ET3-1) protein is Phosphoribosylformylglycinamidine cyclo-ligase.